Consider the following 467-residue polypeptide: Keratin, type 1 cytoskeletal 11 (467 aa).

Residues 1 to 100 are head; sequence MSYSSFSIAQ…GGTDFLLGTS (100 aa). Over residues 12–30 the composition is skewed to low complexity; that stretch reads SRVPSLSGTRSSSSYSLKS. The disordered stretch occupies residues 12 to 32; sequence SRVPSLSGTRSSSSYSLKSDL. Residues 101-137 are coil 1A; that stretch reads GKEAMQNLNDRLADYLARVRSLEDRNRELEQKIREWY. The 313-residue stretch at 101–413 folds into the IF rod domain; it reads GKEAMQNLND…TLLEGDAGRS (313 aa). A linker 1 region spans residues 138–156; sequence EKQGAGTKRKDFSHYFKII. Residues 157-248 form a coil 1B region; sequence ADLQNQINAG…SHDEDMKALR (92 aa). Positions 249 to 268 are linker 12; sequence SQLGGQVNVEVDAAPAEDLT. Positions 269–416 are coil 2; it reads KKLEIIRQRY…EGDAGRSHSS (148 aa). The tract at residues 409–430 is disordered; the sequence is DAGRSHSSSHLSSTVSKDKVPV. The segment at 417 to 463 is tail; that stretch reads SHLSSTVSKDKVPVSSPNVITKVRTIVEEKINGQVISKKEYEGSPDQ.

Belongs to the intermediate filament family. Heterotetramer of two type I and two type II keratins. Expressed in the outermost cell layers of skin epidermis (at protein level).

The polypeptide is Keratin, type 1 cytoskeletal 11 (Protopterus aethiopicus (Marbled lungfish)).